A 109-amino-acid polypeptide reads, in one-letter code: MNPALGNQTDVAGLFLANSSEALERAMRCCTQASVVTDDGFAEGGPDERSLYIMRVVQIAVMCVLSLTVVFGIFFLGCNLLIKSEGMINFLVKDRRPSKEVEAVVVGPY.

Asn-7 and Asn-18 each carry an N-linked (GlcNAc...) asparagine glycan. Residues 56 to 76 (VVQIAVMCVLSLTVVFGIFFL) form a helical membrane-spanning segment. Ser-98 carries the phosphoserine modification.

The protein belongs to the reprimo family.

The protein localises to the cytoplasm. The protein resides in the membrane. May be involved in the regulation of p53-dependent G2 arrest of the cell cycle. Seems to induce cell cycle arrest by inhibiting CDK1 activity and nuclear translocation of the CDC2 cyclin B1 complex. The sequence is that of Protein reprimo (RPRM) from Bos taurus (Bovine).